The chain runs to 292 residues: Coatomer subunit epsilon (292 aa).

The protein belongs to the COPE family. Oligomeric complex that consists of at least the alpha, beta, beta', gamma, delta, epsilon and zeta subunits.

Its subcellular location is the cytoplasm. The protein resides in the golgi apparatus membrane. It is found in the cytoplasmic vesicle. The protein localises to the COPI-coated vesicle membrane. The coatomer is a cytosolic protein complex that binds to dilysine motifs and reversibly associates with Golgi non-clathrin-coated vesicles, which further mediate biosynthetic protein transport from the ER, via the Golgi up to the trans Golgi network. The coatomer complex is required for budding from Golgi membranes, and is essential for the retrograde Golgi-to-ER transport of dilysine-tagged proteins. The sequence is that of Coatomer subunit epsilon (cope-1) from Caenorhabditis elegans.